Consider the following 967-residue polypeptide: Isoleucine--tRNA ligase 2 (967 aa).

The 'HIGH' region signature appears at 58-68 (PYANGDIHIGH). Residues 437–446 (AVTEEAGATG) show a composition bias toward low complexity. A disordered region spans residues 437–466 (AVTEEAGATGEARKVGKAEEAEEAGPAKTL). L-isoleucyl-5'-AMP is bound at residue E598. A 'KMSKS' region motif is present at residues 639-643 (KMSKS). Residue K642 coordinates ATP. C922, C925, C942, and C945 together coordinate Zn(2+).

Belongs to the class-I aminoacyl-tRNA synthetase family. IleS type 1 subfamily. In terms of assembly, monomer. Zn(2+) serves as cofactor.

Its subcellular location is the cytoplasm. It catalyses the reaction tRNA(Ile) + L-isoleucine + ATP = L-isoleucyl-tRNA(Ile) + AMP + diphosphate. Its function is as follows. Catalyzes the attachment of isoleucine to tRNA(Ile). As IleRS can inadvertently accommodate and process structurally similar amino acids such as valine, to avoid such errors it has two additional distinct tRNA(Ile)-dependent editing activities. One activity is designated as 'pretransfer' editing and involves the hydrolysis of activated Val-AMP. The other activity is designated 'posttransfer' editing and involves deacylation of mischarged Val-tRNA(Ile). This Burkholderia mallei (strain ATCC 23344) protein is Isoleucine--tRNA ligase 2.